The sequence spans 644 residues: Major core protein OPG129 (644 aa).

A propeptide spanning residues 1 to 61 is cleaved from the precursor; it reads MEAVVNSDVF…IVDDDFISAG (61 aa). Residues 61-80 are disordered; it reads GARNQRTKPKRAGNDQAQQT.

This sequence belongs to the orthopoxvirus OPG129 family. Post-translationally, the 73-kDa precursor is cleaved to a mature protein of 60 kDa during virion maturation. Proteolytic cleavage of major core proteins OPG129, OPG136, and OPG098, which occurs at a late stage of core formation, is required for production of infectious mature virions (MV).

Its subcellular location is the virion. Functionally, major component of the virion core that undergoes proteolytic processing during the immature virion (IV) to mature virion (MV) transition. Essential for the formation of a structurally normal core. The polypeptide is Major core protein OPG129 (OPG129) (Variola virus (isolate Human/India/Ind3/1967) (VARV)).